We begin with the raw amino-acid sequence, 197 residues long: DNA-directed RNA polymerases I, II, and III subunit rpabc1 (197 aa).

It belongs to the archaeal Rpo5/eukaryotic RPB5 RNA polymerase subunit family. In terms of assembly, component of the RNA polymerase I (Pol I), RNA polymerase II (Pol II) and RNA polymerase III (Pol III) complexes consisting of at least 13, 12 and 17 subunits, respectively. In RNA Pol II, this subunit is present in 2-fold molar excess over the other subunits.

It is found in the nucleus. Functionally, DNA-dependent RNA polymerase catalyzes the transcription of DNA into RNA using the four ribonucleoside triphosphates as substrates. Common component of RNA polymerases I, II and III which synthesize ribosomal RNA precursors, mRNA precursors and many functional non-coding RNAs, and small RNAs, such as 5S rRNA and tRNAs, respectively. Pol II is the central component of the basal RNA polymerase II transcription machinery. Pols are composed of mobile elements that move relative to each other. In Pol II, RPB5 is part of the lower jaw surrounding the central large cleft and thought to grab the incoming DNA template. Seems to be the major component in this process. This is DNA-directed RNA polymerases I, II, and III subunit rpabc1 (polr2e) from Dictyostelium discoideum (Social amoeba).